Consider the following 101-residue polypeptide: Small ribosomal subunit protein uS14 (101 aa).

Belongs to the universal ribosomal protein uS14 family. As to quaternary structure, part of the 30S ribosomal subunit. Contacts proteins S3 and S10.

Functionally, binds 16S rRNA, required for the assembly of 30S particles and may also be responsible for determining the conformation of the 16S rRNA at the A site. This chain is Small ribosomal subunit protein uS14, found in Synechococcus sp. (strain JA-2-3B'a(2-13)) (Cyanobacteria bacterium Yellowstone B-Prime).